Here is a 53-residue protein sequence, read N- to C-terminus: MFRWGIIFLVIALIAAALGFGGLAGTAAGAAKIVFVVGIILFLLSLFTGRKRP.

Helical transmembrane passes span 4–24 and 30–47; these read WGII…GGLA and AAKI…LSLF.

The protein belongs to the UPF0391 family.

It localises to the cell membrane. The polypeptide is UPF0391 membrane protein PC1_0455 (Pectobacterium carotovorum subsp. carotovorum (strain PC1)).